The sequence spans 220 residues: Small ribosomal subunit protein mS23 (220 aa).

Belongs to the mitochondrion-specific ribosomal protein mS23 family. As to quaternary structure, component of the mitochondrial small ribosomal subunit (mt-SSU). Mature yeast 74S mitochondrial ribosomes consist of a small (37S) and a large (54S) subunit. The 37S small subunit contains a 15S ribosomal RNA (15S mt-rRNA) and at least 32 different proteins. The 54S large subunit contains a 21S rRNA (21S mt-rRNA) and at least 45 different proteins.

Its subcellular location is the mitochondrion. Its function is as follows. Component of the mitochondrial ribosome (mitoribosome), a dedicated translation machinery responsible for the synthesis of mitochondrial genome-encoded proteins, including at least some of the essential transmembrane subunits of the mitochondrial respiratory chain. The mitoribosomes are attached to the mitochondrial inner membrane and translation products are cotranslationally integrated into the membrane. This is Small ribosomal subunit protein mS23 (rsm25) from Schizosaccharomyces pombe (strain 972 / ATCC 24843) (Fission yeast).